The primary structure comprises 101 residues: CRISPR-associated endoribonuclease Cas2 (101 aa).

Position 8 (D8) interacts with Mg(2+).

Belongs to the CRISPR-associated endoribonuclease Cas2 protein family. In terms of assembly, homodimer, forms a heterotetramer with a Cas1 homodimer. The cofactor is Mg(2+).

In terms of biological role, CRISPR (clustered regularly interspaced short palindromic repeat), is an adaptive immune system that provides protection against mobile genetic elements (viruses, transposable elements and conjugative plasmids). CRISPR clusters contain sequences complementary to antecedent mobile elements and target invading nucleic acids. CRISPR clusters are transcribed and processed into CRISPR RNA (crRNA). Functions as a ssRNA-specific endoribonuclease. Involved in the integration of spacer DNA into the CRISPR cassette. The polypeptide is CRISPR-associated endoribonuclease Cas2 (Treponema denticola (strain ATCC 35405 / DSM 14222 / CIP 103919 / JCM 8153 / KCTC 15104)).